Consider the following 465-residue polypeptide: Ribulose bisphosphate carboxylase large chain (465 aa).

Lys4 is subject to N6,N6,N6-trimethyllysine. Positions 113 and 163 each coordinate substrate. The Proton acceptor role is filled by Lys165. Residue Lys167 participates in substrate binding. Positions 191, 193, and 194 each coordinate Mg(2+). Lys191 bears the N6-carboxylysine mark. His284 acts as the Proton acceptor in catalysis. Residues Arg285, His317, and Ser369 each coordinate substrate.

It belongs to the RuBisCO large chain family. Type I subfamily. In terms of assembly, heterohexadecamer of 8 large chains and 8 small chains; disulfide-linked. The disulfide link is formed within the large subunit homodimers. Mg(2+) is required as a cofactor. In terms of processing, the disulfide bond which can form in the large chain dimeric partners within the hexadecamer appears to be associated with oxidative stress and protein turnover.

It is found in the plastid. Its subcellular location is the chloroplast. The enzyme catalyses 2 (2R)-3-phosphoglycerate + 2 H(+) = D-ribulose 1,5-bisphosphate + CO2 + H2O. It catalyses the reaction D-ribulose 1,5-bisphosphate + O2 = 2-phosphoglycolate + (2R)-3-phosphoglycerate + 2 H(+). Functionally, ruBisCO catalyzes two reactions: the carboxylation of D-ribulose 1,5-bisphosphate, the primary event in carbon dioxide fixation, as well as the oxidative fragmentation of the pentose substrate in the photorespiration process. Both reactions occur simultaneously and in competition at the same active site. This chain is Ribulose bisphosphate carboxylase large chain, found in Securidaca diversifolia (Easter flower).